We begin with the raw amino-acid sequence, 514 residues long: Peptide chain release factor 3 (514 aa).

The tr-type G domain occupies 8-268 (KKRRTFAIIS…TFLKFAPEPH (261 aa)). Residues 17 to 24 (SHPDAGKT), 85 to 89 (DTPGH), and 139 to 142 (NKLD) each bind GTP.

This sequence belongs to the TRAFAC class translation factor GTPase superfamily. Classic translation factor GTPase family. PrfC subfamily.

Its subcellular location is the cytoplasm. Functionally, increases the formation of ribosomal termination complexes and stimulates activities of RF-1 and RF-2. It binds guanine nucleotides and has strong preference for UGA stop codons. It may interact directly with the ribosome. The stimulation of RF-1 and RF-2 is significantly reduced by GTP and GDP, but not by GMP. The sequence is that of Peptide chain release factor 3 from Streptococcus thermophilus (strain CNRZ 1066).